A 412-amino-acid polypeptide reads, in one-letter code: Phosphate-repressible acid phosphatase (412 aa).

Residues 1 to 19 (MLTKQTLLAFVGALALATG) form the signal peptide. N-linked (GlcNAc...) asparagine glycans are attached at residues Asn-74, Asn-121, Asn-186, and Asn-208. The active-site Proton donor is the Asp-215. 3 N-linked (GlcNAc...) asparagine glycosylation sites follow: Asn-217, Asn-332, and Asn-343.

The N-terminus is blocked.

The protein resides in the secreted. The catalysed reaction is a phosphate monoester + H2O = an alcohol + phosphate. This chain is Phosphate-repressible acid phosphatase (PHOA), found in Penicillium chrysogenum (Penicillium notatum).